Here is a 90-residue protein sequence, read N- to C-terminus: Acylphosphatase (90 aa).

Residues 5-90 (CVKASVKGIV…WRHIDGFEIK (86 aa)) enclose the Acylphosphatase-like domain. Active-site residues include Arg-20 and Asn-38.

The protein belongs to the acylphosphatase family.

The catalysed reaction is an acyl phosphate + H2O = a carboxylate + phosphate + H(+). This Photobacterium profundum (strain SS9) protein is Acylphosphatase (acyP).